Reading from the N-terminus, the 221-residue chain is Transcription factor otaR1 (221 aa).

Residues 109-146 are disordered; it reads ASRSRPAFSTPASRPGLSSAKSPSLGATSPGSMDRSEE. The segment covering 127–139 has biased composition (polar residues); sequence SAKSPSLGATSPG. Residues 152–192 are basic motif; that stretch reads KKYHEKYKERNRLAAGRSRQKQADLINLLQAEQQEEERRRK. Residues 152 to 215 form the bZIP domain; sequence KKYHEKYKER…VDMKQELQHH (64 aa). The tract at residues 198–212 is leucine-zipper; that stretch reads IANMQKELVDMKQEL.

It localises to the nucleus. Its function is as follows. Transcription factor; part of the gene cluster that mediates the biosynthesis of ochratoxin A (OTA), a mycotoxin demonstrated to have nephrotoxic, immunotoxic, genotoxic, neurotoxic, and teratogenic properties. Positively regulates the expression of the OTA biosynthetic genes and subsequent production of OTA. Probably binds to conserved 5'-ACGT-3' bZIP binding motifs found in multiple copies (3 to 4) in the promoters of the OTA biosynthetic genes. Acts not only as a pathway-specific regulator of the OTA cluster but also binds at other chromosomal positions outside the OTA cluster and can act as a broad regulator. Negatively regulates pathogenicity and plays a critical role in tolerance to reactive oxygen species (ROS). This is Transcription factor otaR1 from Aspergillus niger (strain ATCC MYA-4892 / CBS 513.88 / FGSC A1513).